Consider the following 309-residue polypeptide: Ribonuclease Z (309 aa).

Zn(2+) contacts are provided by H61, H63, D65, H66, H144, D212, and H271. D65 functions as the Proton acceptor in the catalytic mechanism.

Belongs to the RNase Z family. As to quaternary structure, homodimer. Zn(2+) is required as a cofactor.

The enzyme catalyses Endonucleolytic cleavage of RNA, removing extra 3' nucleotides from tRNA precursor, generating 3' termini of tRNAs. A 3'-hydroxy group is left at the tRNA terminus and a 5'-phosphoryl group is left at the trailer molecule.. Its function is as follows. Zinc phosphodiesterase, which displays some tRNA 3'-processing endonuclease activity. Probably involved in tRNA maturation, by removing a 3'-trailer from precursor tRNA. This is Ribonuclease Z from Clostridium acetobutylicum (strain ATCC 824 / DSM 792 / JCM 1419 / IAM 19013 / LMG 5710 / NBRC 13948 / NRRL B-527 / VKM B-1787 / 2291 / W).